Consider the following 257-residue polypeptide: Glutamate racemase (257 aa).

Substrate contacts are provided by residues D12–S13 and Y44–G45. The active-site Proton donor/acceptor is the C75. A substrate-binding site is contributed by N76 to T77. C185 serves as the catalytic Proton donor/acceptor. T186–H187 contacts substrate.

It belongs to the aspartate/glutamate racemases family.

It carries out the reaction L-glutamate = D-glutamate. It functions in the pathway cell wall biogenesis; peptidoglycan biosynthesis. Functionally, provides the (R)-glutamate required for cell wall biosynthesis. This is Glutamate racemase from Clostridium botulinum (strain Loch Maree / Type A3).